Reading from the N-terminus, the 265-residue chain is Putative hydro-lyase PA2116 (265 aa).

This sequence belongs to the D-glutamate cyclase family.

The polypeptide is Putative hydro-lyase PA2116 (Pseudomonas aeruginosa (strain ATCC 15692 / DSM 22644 / CIP 104116 / JCM 14847 / LMG 12228 / 1C / PRS 101 / PAO1)).